The primary structure comprises 339 residues: DNA-directed RNA polymerase subunit alpha (339 aa).

Residues Met-1–Glu-233 form an alpha N-terminal domain (alpha-NTD) region. The segment at Ile-267–Phe-339 is alpha C-terminal domain (alpha-CTD).

Belongs to the RNA polymerase alpha chain family. In plastids the minimal PEP RNA polymerase catalytic core is composed of four subunits: alpha, beta, beta', and beta''. When a (nuclear-encoded) sigma factor is associated with the core the holoenzyme is formed, which can initiate transcription.

It is found in the plastid. It localises to the chloroplast. The catalysed reaction is RNA(n) + a ribonucleoside 5'-triphosphate = RNA(n+1) + diphosphate. DNA-dependent RNA polymerase catalyzes the transcription of DNA into RNA using the four ribonucleoside triphosphates as substrates. The sequence is that of DNA-directed RNA polymerase subunit alpha from Populus trichocarpa (Western balsam poplar).